The following is a 302-amino-acid chain: Tegument protein VP22 (302 aa).

The span at M1–C10 shows a compositional bias: basic and acidic residues. Disordered stretches follow at residues M1–S42 and S125–C170. Residues R154 to A244 are interaction with gE. The span at S157 to C170 shows a compositional bias: polar residues. The short motif at L212 to T224 is the Nuclear export signal element. The segment at G243 to K302 is disordered.

It belongs to the alphaherpesvirinae VP22 tegument protein family. Interacts with gE (via C-terminus); this interaction is necessary for the recruitment of VP22/ORF9 to the Golgi and its packaging into virions. Interacts with gM (via C-terminus). Interacts with VP16/ORF10; this interaction allows the formation of a tripartite complex composed of VP16/ORF10, VP22/ORF9 and VHS/ORF17. Interacts with the capsid-binding protein ORF44. Interacts with host CGAS. Highly phosphorylated in the host cell. Packaging is selective for underphosphorylated forms.

Its subcellular location is the virion tegument. It localises to the host cytoplasm. It is found in the host nucleus. The protein resides in the host Golgi apparatus. Functionally, tegument protein that plays different roles during the time course of infection. Participates in both the accumulation of viral mRNAs and viral protein translation at late time of infection. Modulates the RNase activity of the virion host shutoff protein ORF17 probably to ensure necessary levels of key cellular mRNAs and proteins. Plays a role in microtubule reorganization that occurs after viral infection by stabilizing microtubule network. Plays a role in the inhibition of host innate immune system by targeting the CGAS enzymatic activity which is the principal cytosolic DNA sensor that detects invading viral DNA. Acts by mediating disruption of liquid-like droplets in which CGAS is activated, thereby preventing CGAS activity. The polypeptide is Tegument protein VP22 (Homo sapiens (Human)).